The chain runs to 951 residues: Serine/threonine-protein phosphatase 4 regulatory subunit 1 (951 aa).

HEAT repeat units lie at residues 26–63 (ESDV…VFNR), 82–119 (RDCI…FCQE), 127–164 (AFSK…QELI), 168–206 (DVET…MVGK), 208–246 (ITER…VVGQ), 248–285 (ATEE…ATCQ), and 287–324 (IRRT…TFAN). 4 disordered regions span residues 326–395 (SSSG…DMRV), 407–501 (SESP…MATR), 539–569 (HDEA…SISE), and 592–612 (GGAD…ERRP). Basic and acidic residues-rich tracts occupy residues 332 to 360 (FKDE…RPED), 464 to 483 (DLDK…ERTG), and 539 to 551 (HDEA…RSEL). Residues 502-539 (KELEEMIENLEPHMDDPDVKAQVEVLSAALRASTLDAH) form an HEAT 8 repeat. Positions 594–604 (ADVGPGGGGGF) are enriched in gly residues. 4 HEAT repeats span residues 699-735 (LTAA…LLHI), 777-815 (RDVY…KLHM), 820-858 (TFGV…DDCL), and 862-899 (QFAV…EKEY). Phosphoserine is present on serine 936.

Serine/threonine-protein phosphatase 4 (PP4) occurs in different assemblies of the catalytic and one or more regulatory subunits. Component of the PP4 complex PPP4C-PPP4R1. Interacts with HDAC3.

Functionally, regulatory subunit of serine/threonine-protein phosphatase 4. May play a role in regulation of cell division in renal glomeruli. The PPP4C-PPP4R1 PP4 complex may play a role in dephosphorylation and regulation of HDAC3. Plays a role in the inhibition of TNF-induced NF-kappa-B activation by regulating the dephosphorylation of TRAF2. The polypeptide is Serine/threonine-protein phosphatase 4 regulatory subunit 1 (Ppp4r1) (Rattus norvegicus (Rat)).